The primary structure comprises 206 residues: N-(5'-phosphoribosyl)anthranilate isomerase (206 aa).

It belongs to the TrpF family.

The catalysed reaction is N-(5-phospho-beta-D-ribosyl)anthranilate = 1-(2-carboxyphenylamino)-1-deoxy-D-ribulose 5-phosphate. The protein operates within amino-acid biosynthesis; L-tryptophan biosynthesis; L-tryptophan from chorismate: step 3/5. The sequence is that of N-(5'-phosphoribosyl)anthranilate isomerase from Rubrobacter xylanophilus (strain DSM 9941 / JCM 11954 / NBRC 16129 / PRD-1).